The primary structure comprises 561 residues: AT-rich interactive domain-containing protein 3B (561 aa).

The residue at position 1 (M1) is an N-acetylmethionine. Over residues 1–17 (MEPLQQQQQQQQQQQKQ) the composition is skewed to low complexity. Disordered stretches follow at residues 1–36 (MEPL…QQMR), 53–122 (LSAT…SKYF), and 136–179 (PMSN…WNLD). S89 is subject to Phosphoserine. The segment covering 90–109 (EPEEEDGGLEDEDGDDEVAE) has biased composition (acidic residues). The segment covering 152–162 (QAKEDHTKDAS) has biased composition (basic and acidic residues). The segment covering 164-178 (ASPSVSTAGQPNWNL) has biased composition (polar residues). Phosphoserine is present on S165. The segment at 203-365 (SRDFAKLYEL…SPPKIRFPIL (163 aa)) is interaction with RB1. One can recognise an ARID domain in the interval 215–307 (DPERKEFLDD…YLYAYECEKK (93 aa)). A Phosphoserine modification is found at S311. R361 carries the asymmetric dimethylarginine modification. The interval 370 to 397 (SSGTNTSSPRISPATTLRKGDGAPVTTV) is disordered. In terms of domain architecture, REKLES spans 419 to 517 (AALEQLRERL…GVLFAQKPVV (99 aa)). Residues 490–513 (SSIGSINMSVDIDGTTYAGVLFAQ) form an interaction with ARID3A region. Low complexity predominate over residues 523-552 (SAPQSLGSSASSSSSSHCSPSPTSSRGTPS). The segment at 523-561 (SAPQSLGSSASSSSSSHCSPSPTSSRGTPSAEPSTSWSL) is disordered.

Heterodimer with ARID3A. Interacts with unphosphorylated RB1. Expressed in placenta, testis and leukocytes. Expressed in neuroblastoma. Present in K-562 erythrocytic leukemia cell line (at protein level).

The protein resides in the nucleus. Its function is as follows. Transcription factor which may be involved in neuroblastoma growth and malignant transformation. Favors nuclear targeting of ARID3A. The chain is AT-rich interactive domain-containing protein 3B (ARID3B) from Homo sapiens (Human).